A 311-amino-acid polypeptide reads, in one-letter code: Malate dehydrogenase (311 aa).

NAD(+) is bound by residues 7–13 (GAAGGIG) and aspartate 34. Arginine 81 and arginine 87 together coordinate substrate. Residues asparagine 94 and 117–119 (ITN) contribute to the NAD(+) site. 2 residues coordinate substrate: asparagine 119 and arginine 153. The Proton acceptor role is filled by histidine 177. Methionine 227 provides a ligand contact to NAD(+).

It belongs to the LDH/MDH superfamily. MDH type 1 family. In terms of assembly, homodimer.

The enzyme catalyses (S)-malate + NAD(+) = oxaloacetate + NADH + H(+). Catalyzes the reversible oxidation of malate to oxaloacetate. The polypeptide is Malate dehydrogenase (Haemophilus influenzae (strain PittGG)).